The chain runs to 663 residues: Guanine nucleotide exchange factor subunit RGP1 (663 aa).

6 positions are modified to phosphoserine: serine 351, serine 354, serine 357, serine 363, serine 364, and serine 370. A disordered region spans residues 412–443; the sequence is GKDEDSSDPEPNDSHFSNEMVTSAESSLRSDA. Over residues 426–440 the composition is skewed to polar residues; that stretch reads HFSNEMVTSAESSLR.

This sequence belongs to the RGP1 family. Forms a complex with RIC1.

It localises to the golgi apparatus. Its function is as follows. The RIC1-RGP1 complex acts as a guanine nucleotide exchange factor (GEF), which activates YPT6 by exchanging bound GDP for free GTP. It is thereby required for efficient fusion of endosome-derived vesicles with the Golgi. The RIC1-RGP1 participates in the recycling of SNC1, presumably by mediating fusion of endosomal vesicles with the Golgi compartment. Functionally, required for proper mitotic growth. In Saccharomyces cerevisiae (strain ATCC 204508 / S288c) (Baker's yeast), this protein is Guanine nucleotide exchange factor subunit RGP1.